A 355-amino-acid polypeptide reads, in one-letter code: Protein MGF 360-3L (355 aa).

One copy of the ANK repeat lies at 60–92 (KLNTALVLAVKENNYDLIVLFTEWGANINYALL).

Belongs to the asfivirus MGF 360 family.

Plays a role in virus cell tropism, and may be required for efficient virus replication in macrophages. The chain is Protein MGF 360-3L from Ornithodoros (relapsing fever ticks).